The following is a 229-amino-acid chain: Phosphoglycolate phosphatase (229 aa).

Residue Asp-18 is the Nucleophile of the active site. Asp-18, Asp-20, and Asp-176 together coordinate Mg(2+).

The protein belongs to the HAD-like hydrolase superfamily. CbbY/CbbZ/Gph/YieH family. Requires Mg(2+) as cofactor.

It catalyses the reaction 2-phosphoglycolate + H2O = glycolate + phosphate. It functions in the pathway organic acid metabolism; glycolate biosynthesis; glycolate from 2-phosphoglycolate: step 1/1. Specifically catalyzes the dephosphorylation of 2-phosphoglycolate. Is involved in the dissimilation of the intracellular 2-phosphoglycolate formed during the DNA repair of 3'-phosphoglycolate ends, a major class of DNA lesions induced by oxidative stress. This is Phosphoglycolate phosphatase from Xylella fastidiosa (strain 9a5c).